The primary structure comprises 225 residues: PKHD-type hydroxylase YbiX (225 aa).

The region spanning 78–177 is the Fe2OG dioxygenase domain; the sequence is TLSTPLFNRY…RVASFMWIQS (100 aa). Residues H96, D98, and H158 each coordinate Fe cation. Residue R168 coordinates 2-oxoglutarate.

Requires Fe(2+) as cofactor. L-ascorbate serves as cofactor.

The protein is PKHD-type hydroxylase YbiX of Escherichia coli (strain K12 / DH10B).